The primary structure comprises 94 residues: Small ribosomal subunit protein uS19 (94 aa).

The protein belongs to the universal ribosomal protein uS19 family.

Protein S19 forms a complex with S13 that binds strongly to the 16S ribosomal RNA. This is Small ribosomal subunit protein uS19 from Halothermothrix orenii (strain H 168 / OCM 544 / DSM 9562).